The following is a 261-amino-acid chain: Putative methyltransferase MJ0046 (261 aa).

This sequence belongs to the methyltransferase superfamily.

This Methanocaldococcus jannaschii (strain ATCC 43067 / DSM 2661 / JAL-1 / JCM 10045 / NBRC 100440) (Methanococcus jannaschii) protein is Putative methyltransferase MJ0046.